A 330-amino-acid chain; its full sequence is Malate dehydrogenase (330 aa).

12–18 (GAAGQIG) is an NAD(+) binding site. The substrate site is built by R93 and R99. NAD(+) is bound by residues N106, Q113, and 130 to 132 (VGN). Residues N132 and R163 each contribute to the substrate site. The active-site Proton acceptor is H188.

This sequence belongs to the LDH/MDH superfamily. MDH type 2 family.

The catalysed reaction is (S)-malate + NAD(+) = oxaloacetate + NADH + H(+). Functionally, catalyzes the reversible oxidation of malate to oxaloacetate. This chain is Malate dehydrogenase, found in Legionella pneumophila (strain Lens).